A 355-amino-acid chain; its full sequence is Guanine nucleotide-binding protein G(z) subunit alpha (355 aa).

The segment covering 1–14 (MGCRQSSEEKEAAR) has biased composition (basic and acidic residues). Residues 1–26 (MGCRQSSEEKEAARRSRRIDRHLRSE) are disordered. Gly2 carries N-myristoyl glycine lipidation. Cys3 carries S-palmitoyl cysteine lipidation. In terms of domain architecture, G-alpha spans 32 to 355 (REIKLLLLGT…QNNLKYIGLC (324 aa)). The segment at 35 to 48 (KLLLLGTSNSGKST) is G1 motif. GTP-binding positions include 40–47 (GTSNSGKS), 176–182 (LRSRDMT), 201–205 (DVGGQ), 270–273 (NKKD), and Ala327. Residue Ser47 coordinates Mg(2+). Residues 174–182 (DILRSRDMT) are G2 motif. Arg179 carries the ADP-ribosylarginine; by cholera toxin modification. A Mg(2+)-binding site is contributed by Thr182. The segment at 197–206 (FKMVDVGGQR) is G3 motif. Residues 266–273 (ILFLNKKD) form a G4 motif region. A G5 motif region spans residues 325-330 (TCATDT).

It belongs to the G-alpha family. G(i/o/t/z) subfamily. As to quaternary structure, G-proteins are composed of 3 units; alpha, beta and gamma. The alpha chain contains the guanine nucleotide binding site. Interacts with ADGRB2.

It is found in the membrane. Its function is as follows. Guanine nucleotide-binding proteins (G proteins) are involved as modulators or transducers in various transmembrane signaling systems. The chain is Guanine nucleotide-binding protein G(z) subunit alpha (GNAZ) from Homo sapiens (Human).